We begin with the raw amino-acid sequence, 179 residues long: Adenine phosphoribosyltransferase (179 aa).

Belongs to the purine/pyrimidine phosphoribosyltransferase family. In terms of assembly, homodimer.

It is found in the cytoplasm. The catalysed reaction is AMP + diphosphate = 5-phospho-alpha-D-ribose 1-diphosphate + adenine. It participates in purine metabolism; AMP biosynthesis via salvage pathway; AMP from adenine: step 1/1. Catalyzes a salvage reaction resulting in the formation of AMP, that is energically less costly than de novo synthesis. In Nitrobacter hamburgensis (strain DSM 10229 / NCIMB 13809 / X14), this protein is Adenine phosphoribosyltransferase.